Consider the following 575-residue polypeptide: Proline--tRNA ligase (575 aa).

Belongs to the class-II aminoacyl-tRNA synthetase family. ProS type 1 subfamily. In terms of assembly, homodimer.

It localises to the cytoplasm. The enzyme catalyses tRNA(Pro) + L-proline + ATP = L-prolyl-tRNA(Pro) + AMP + diphosphate. Catalyzes the attachment of proline to tRNA(Pro) in a two-step reaction: proline is first activated by ATP to form Pro-AMP and then transferred to the acceptor end of tRNA(Pro). As ProRS can inadvertently accommodate and process non-cognate amino acids such as alanine and cysteine, to avoid such errors it has two additional distinct editing activities against alanine. One activity is designated as 'pretransfer' editing and involves the tRNA(Pro)-independent hydrolysis of activated Ala-AMP. The other activity is designated 'posttransfer' editing and involves deacylation of mischarged Ala-tRNA(Pro). The misacylated Cys-tRNA(Pro) is not edited by ProRS. This chain is Proline--tRNA ligase, found in Saccharophagus degradans (strain 2-40 / ATCC 43961 / DSM 17024).